We begin with the raw amino-acid sequence, 403 residues long: D-galactonate dehydratase family member Mmwyl1_0037 (403 aa).

Substrate is bound by residues N37 and H122. Y159 serves as the catalytic Proton donor/acceptor. Residue D211 coordinates Mg(2+). The active-site Proton donor/acceptor is H213. Residues E237 and E263 each coordinate Mg(2+). E263, R284, H313, D317, and E340 together coordinate substrate.

The protein belongs to the mandelate racemase/muconate lactonizing enzyme family. GalD subfamily. Mg(2+) is required as a cofactor.

It carries out the reaction D-mannonate = 2-dehydro-3-deoxy-D-gluconate + H2O. Functionally, has low D-mannonate dehydratase activity (in vitro), suggesting that this is not a physiological substrate and that it has no significant role in D-mannonate degradation in vivo. Has no detectable activity with a panel of 70 other acid sugars (in vitro). The sequence is that of D-galactonate dehydratase family member Mmwyl1_0037 from Marinomonas sp. (strain MWYL1).